A 338-amino-acid chain; its full sequence is tRNA N6-adenosine threonylcarbamoyltransferase (338 aa).

Fe cation contacts are provided by His-111 and His-115. Substrate is bound by residues 134 to 138, Asp-167, Gly-180, and Asn-272; that span reads LVSGG. Asp-300 serves as a coordination point for Fe cation.

This sequence belongs to the KAE1 / TsaD family. Requires Fe(2+) as cofactor.

Its subcellular location is the cytoplasm. It catalyses the reaction L-threonylcarbamoyladenylate + adenosine(37) in tRNA = N(6)-L-threonylcarbamoyladenosine(37) in tRNA + AMP + H(+). Its function is as follows. Required for the formation of a threonylcarbamoyl group on adenosine at position 37 (t(6)A37) in tRNAs that read codons beginning with adenine. Is involved in the transfer of the threonylcarbamoyl moiety of threonylcarbamoyl-AMP (TC-AMP) to the N6 group of A37, together with TsaE and TsaB. TsaD likely plays a direct catalytic role in this reaction. This chain is tRNA N6-adenosine threonylcarbamoyltransferase, found in Shewanella pealeana (strain ATCC 700345 / ANG-SQ1).